Consider the following 426-residue polypeptide: Glutamate-1-semialdehyde 2,1-aminomutase (426 aa).

Lysine 265 carries the post-translational modification N6-(pyridoxal phosphate)lysine.

This sequence belongs to the class-III pyridoxal-phosphate-dependent aminotransferase family. HemL subfamily. Homodimer. Pyridoxal 5'-phosphate is required as a cofactor.

It is found in the cytoplasm. The catalysed reaction is (S)-4-amino-5-oxopentanoate = 5-aminolevulinate. Its pathway is porphyrin-containing compound metabolism; protoporphyrin-IX biosynthesis; 5-aminolevulinate from L-glutamyl-tRNA(Glu): step 2/2. This chain is Glutamate-1-semialdehyde 2,1-aminomutase, found in Neisseria gonorrhoeae (strain ATCC 700825 / FA 1090).